The chain runs to 1706 residues: Bifunctional hemolysin/adenylate cyclase (1706 aa).

The a, catalytic stretch occupies residues 1-399 (MQQSHQAGYA…RRPSLGAVER (399 aa)). Position 349–356 (349–356 (AYGVAGKS)) interacts with ATP. The interval 367–405 (GVPGGRSKSSPDVLETVPASPGLRRPSLGAVERQDSGYD) is disordered. The interval 400–912 (QDSGYDSLDG…LKHSIKLEVI (513 aa)) is b, Ala/Gly-rich. Residues 500–698 (LSAAVFGLGE…SVVGAPVAVV (199 aa)) are required for interaction with CyaC. Residues K860 and K983 are each lipidated (N6-palmitoyl lysine). Residues 913-1656 (GGDGDDVVLA…RDADHRVEAI (744 aa)) form a c region. Hemolysin-type calcium-binding repeat units lie at residues 1014–1031 (IGGA…DNFL), 1032–1049 (AGGA…NDTL), 1050–1067 (VGGE…DDVF), 1155–1172 (WGDD…DDIL), 1173–1190 (RGGL…NDIF), 1279–1296 (MGQG…DDLL), 1297–1314 (FGGD…NDTL), 1315–1332 (YGGL…NDWF), 1335–1352 (TPAR…VDTV), 1411–1428 (TGDA…ADVL), 1429–1446 (AGGE…DDQL), 1447–1464 (SGDA…DDWF), 1468–1484 (AANA…NDTV), 1537–1554 (IGDA…NDVL), 1555–1572 (SGGA…SDLL), 1573–1590 (SGDA…DDTY), and 1603–1620 (ESGG…ADQL). The interval 1657–1706 (HAANQAIDPAGIEKLVEAMAQYPDPGAAAAAPPAARVPDTLMQSLAVNWR) is d, Asp/Gly-rich.

It in the N-terminal section; belongs to the adenylyl cyclase class-2 family. The protein in the C-terminal section; belongs to the RTX prokaryotic toxin family. In terms of processing, released in a processed form. Post-translationally, palmitoylated at Lys-860 and Lys-983 by CyaC. The toxin only becomes active when modified in position Lys-983: palmitoylation is required for efficient membrane insertion and pore formation of the acylated Hemolysin chain.

It is found in the secreted. It localises to the host cell membrane. It catalyses the reaction ATP = 3',5'-cyclic AMP + diphosphate. With respect to regulation, activated by host calmodulin. In terms of biological role, bifunctional adenylate cyclase toxin-hemolysin that plays a crucial role in host colonization. It causes whooping cough by acting on mammalian cells by elevating cAMP-concentration and thus disrupts normal cell function. Adenylate cyclase that is activated by host intracellular calmodulin and catalyzes un-regulated conversion of ATP to cAMP, thereby impairing microbicidal functions of immune effector cells and inducing apoptosis of lung macrophages. Its function is as follows. Hemolysin that forms small cation-selective membrane channels, leading to hemolytic activity. The hemolytic activity of CyaA is weak compared with that of the HlyA of E.coli. This is Bifunctional hemolysin/adenylate cyclase (cya) from Bordetella bronchiseptica (strain ATCC BAA-588 / NCTC 13252 / RB50) (Alcaligenes bronchisepticus).